The primary structure comprises 901 residues: Probable inorganic carbon transporter subunit DabA (901 aa).

Cysteine 424, aspartate 426, histidine 606, and cysteine 621 together coordinate Zn(2+).

This sequence belongs to the inorganic carbon transporter (TC 9.A.2) DabA family. Forms a complex with DabB. It depends on Zn(2+) as a cofactor.

The protein localises to the cell membrane. Its function is as follows. Part of an energy-coupled inorganic carbon pump. In Staphylococcus aureus (strain MSSA476), this protein is Probable inorganic carbon transporter subunit DabA.